A 151-amino-acid polypeptide reads, in one-letter code: Deoxyuridine 5'-triphosphate nucleotidohydrolase (151 aa).

Substrate is bound by residues 70 to 72 (RSG), Asn83, 87 to 89 (LID), and Met97.

It belongs to the dUTPase family. Mg(2+) is required as a cofactor.

It carries out the reaction dUTP + H2O = dUMP + diphosphate + H(+). Its pathway is pyrimidine metabolism; dUMP biosynthesis; dUMP from dCTP (dUTP route): step 2/2. Functionally, this enzyme is involved in nucleotide metabolism: it produces dUMP, the immediate precursor of thymidine nucleotides and it decreases the intracellular concentration of dUTP so that uracil cannot be incorporated into DNA. The protein is Deoxyuridine 5'-triphosphate nucleotidohydrolase of Azotobacter vinelandii (strain DJ / ATCC BAA-1303).